The chain runs to 332 residues: Phosphate acyltransferase (332 aa).

It belongs to the PlsX family. Homodimer. Probably interacts with PlsY.

It localises to the cytoplasm. The enzyme catalyses a fatty acyl-[ACP] + phosphate = an acyl phosphate + holo-[ACP]. It participates in lipid metabolism; phospholipid metabolism. Functionally, catalyzes the reversible formation of acyl-phosphate (acyl-PO(4)) from acyl-[acyl-carrier-protein] (acyl-ACP). This enzyme utilizes acyl-ACP as fatty acyl donor, but not acyl-CoA. This chain is Phosphate acyltransferase, found in Streptococcus mutans serotype c (strain ATCC 700610 / UA159).